We begin with the raw amino-acid sequence, 37 residues long: Palicourein (37 aa).

Residues 1-37 constitute a cross-link (cyclopeptide (Gly-Asn)); the sequence is GDPTFCGETCRVIPVCTYSAALGCTCDDRSDGLCKRN. 3 disulfides stabilise this stretch: Cys6-Cys24, Cys10-Cys26, and Cys16-Cys34.

The protein belongs to the cyclotide family. Post-translationally, this is a cyclic peptide.

Probably participates in a plant defense mechanism. Inhibits the cytopathic effects of the human immunodeficiency virus. The chain is Palicourein from Palicourea condensata (Cappel).